The primary structure comprises 375 residues: MEMQQNCSISCFWETQPLGCVKISCIFYHSKPRNINGLFLPPSSNIILQKETQEGIPPPTQSQEPLKPQENISRPIHHPLVLKTNFEEEEEEEGEQNDASSLWTKTPEEIEEKRAIKEMCYKSGEYYRVHTPSDISSSKSIASIVEKEIEKSLESGSELQEGDGLTVPTKFSLFERQGEIKASLDRKPRTDIAAFENGGGDCYVPQRIIFLGVDENEVLTEEKESTISKCSNAKVNDVHPVMKPHFKGVKKRKWIYDEPKNFPEPGMQRVQASNPKNKMSYHRNNKNKNSENASYIHVQRDAVRTVSLNAPPHGRPPHGSYNKADVNKEPKFKLCSDKYMSTSYNGSAWQKRIPFSKTYSKNEKIYTEPRRNGSK.

A disordered region spans residues 54–78 (EGIPPPTQSQEPLKPQENISRPIHH).

This is an uncharacterized protein from Bos taurus (Bovine).